A 429-amino-acid polypeptide reads, in one-letter code: Enolase (429 aa).

Glutamine 163 serves as a coordination point for (2R)-2-phosphoglycerate. Glutamate 205 acts as the Proton donor in catalysis. Aspartate 242, glutamate 285, and aspartate 312 together coordinate Mg(2+). Residues lysine 337, arginine 366, serine 367, and lysine 388 each contribute to the (2R)-2-phosphoglycerate site. Residue lysine 337 is the Proton acceptor of the active site.

It belongs to the enolase family. Mg(2+) is required as a cofactor.

It is found in the cytoplasm. The protein localises to the secreted. It localises to the cell surface. The enzyme catalyses (2R)-2-phosphoglycerate = phosphoenolpyruvate + H2O. It participates in carbohydrate degradation; glycolysis; pyruvate from D-glyceraldehyde 3-phosphate: step 4/5. Catalyzes the reversible conversion of 2-phosphoglycerate (2-PG) into phosphoenolpyruvate (PEP). It is essential for the degradation of carbohydrates via glycolysis. The polypeptide is Enolase (Oceanobacillus iheyensis (strain DSM 14371 / CIP 107618 / JCM 11309 / KCTC 3954 / HTE831)).